A 425-amino-acid polypeptide reads, in one-letter code: Serine hydroxymethyltransferase (425 aa).

Residue 132-134 (GHL) coordinates (6S)-5,6,7,8-tetrahydrofolate. The residue at position 237 (K237) is an N6-(pyridoxal phosphate)lysine.

It belongs to the SHMT family. In terms of assembly, homodimer. The cofactor is pyridoxal 5'-phosphate.

Its subcellular location is the cytoplasm. It carries out the reaction (6R)-5,10-methylene-5,6,7,8-tetrahydrofolate + glycine + H2O = (6S)-5,6,7,8-tetrahydrofolate + L-serine. It participates in one-carbon metabolism; tetrahydrofolate interconversion. It functions in the pathway amino-acid biosynthesis; glycine biosynthesis; glycine from L-serine: step 1/1. Catalyzes the reversible interconversion of serine and glycine with tetrahydrofolate (THF) serving as the one-carbon carrier. This reaction serves as the major source of one-carbon groups required for the biosynthesis of purines, thymidylate, methionine, and other important biomolecules. Also exhibits THF-independent aldolase activity toward beta-hydroxyamino acids, producing glycine and aldehydes, via a retro-aldol mechanism. This chain is Serine hydroxymethyltransferase, found in Wolbachia sp. subsp. Brugia malayi (strain TRS).